The sequence spans 151 residues: SsrA-binding protein (151 aa).

The disordered stretch occupies residues 132–151 (KRQTIKKRDQDREIHRKYGI).

The protein belongs to the SmpB family.

It is found in the cytoplasm. Required for rescue of stalled ribosomes mediated by trans-translation. Binds to transfer-messenger RNA (tmRNA), required for stable association of tmRNA with ribosomes. tmRNA and SmpB together mimic tRNA shape, replacing the anticodon stem-loop with SmpB. tmRNA is encoded by the ssrA gene; the 2 termini fold to resemble tRNA(Ala) and it encodes a 'tag peptide', a short internal open reading frame. During trans-translation Ala-aminoacylated tmRNA acts like a tRNA, entering the A-site of stalled ribosomes, displacing the stalled mRNA. The ribosome then switches to translate the ORF on the tmRNA; the nascent peptide is terminated with the 'tag peptide' encoded by the tmRNA and targeted for degradation. The ribosome is freed to recommence translation, which seems to be the essential function of trans-translation. The chain is SsrA-binding protein from Lactobacillus johnsonii (strain CNCM I-12250 / La1 / NCC 533).